The following is a 515-amino-acid chain: Fatty acyl-CoA reductase 2 (515 aa).

Topologically, residues 1–464 (MSMIAAFYSN…KAKQHLRRLR (464 aa)) are cytoplasmic. Residues 465 to 484 (NIHYLFNTALFLIIWRLLIA) form a helical membrane-spanning segment. Topologically, residues 485–515 (RSQMARNVWFFIVSFCYKFISYFRASSTLKV) are peroxisomal.

The protein belongs to the fatty acyl-CoA reductase family. As to expression, specifically expressed in the meibomian glands of the eyelid and the sebaceous glands of the skin. Also expressed in the brain where large quantities of ether lipids are synthesized.

The protein localises to the peroxisome membrane. It carries out the reaction a long-chain fatty acyl-CoA + 2 NADPH + 2 H(+) = a long-chain primary fatty alcohol + 2 NADP(+) + CoA. It catalyses the reaction hexadecanoyl-CoA + 2 NADPH + 2 H(+) = hexadecan-1-ol + 2 NADP(+) + CoA. The enzyme catalyses octadecanoyl-CoA + 2 NADPH + 2 H(+) = octadecan-1-ol + 2 NADP(+) + CoA. The catalysed reaction is a very long-chain fatty acyl-CoA + 2 NADPH + 2 H(+) = a very long-chain primary fatty alcohol + 2 NADP(+) + CoA. It carries out the reaction an ultra-long-chain fatty acyl-CoA + 2 NADPH + 2 H(+) = an ultra long-chain primary fatty alcohol + 2 NADP(+) + CoA. It catalyses the reaction eicosanoyl-CoA + 2 NADPH + 2 H(+) = eicosan-1-ol + 2 NADP(+) + CoA. The enzyme catalyses docosanoyl-CoA + 2 NADPH + 2 H(+) = docosan-1-ol + 2 NADP(+) + CoA. The catalysed reaction is tetracosanoyl-CoA + 2 NADPH + 2 H(+) = tetracosan-1-ol + 2 NADP(+) + CoA. It carries out the reaction hexacosanoyl-CoA + 2 NADPH + 2 H(+) = hexacosan-1-ol + 2 NADP(+) + CoA. It catalyses the reaction octacosanoyl-CoA + 2 NADPH + 2 H(+) = octacosan-1-ol + 2 NADP(+) + CoA. The enzyme catalyses triacontanoyl-CoA + 2 NADPH + 2 H(+) = triacontan-1-ol + 2 NADP(+) + CoA. The catalysed reaction is 18-methylnonadecanoyl-CoA + 2 NADPH + 2 H(+) = 18-methylnonadecan-1-ol + 2 NADP(+) + CoA. It carries out the reaction 20-methylheneicosanoyl-CoA + 2 NADPH + 2 H(+) = 20-methylheneicosan-1-ol + 2 NADP(+) + CoA. It catalyses the reaction 22-methyltricosanoyl-CoA + 2 NADPH + 2 H(+) = 22-methyltricosan-1-ol + 2 NADP(+) + CoA. The enzyme catalyses 24-methylpentacosanoyl-CoA + 2 NADPH + 2 H(+) = 24-methylpentacosan-1-ol + 2 NADP(+) + CoA. Functionally, catalyzes the reduction of saturated but not unsaturated C16 or C18 fatty acyl-CoA to fatty alcohols. A lower activity can be observed with shorter fatty acyl-CoA substrates. Can produce very long-chain and ultra long-chain FAls, regardless of whether they have a straight or branched chain. It may play a role in the production of ether lipids/plasmalogens and wax monoesters which synthesis requires fatty alcohols as substrates. This Mus musculus (Mouse) protein is Fatty acyl-CoA reductase 2.